Reading from the N-terminus, the 219-residue chain is MPLQDTTLHIRHLGKQDYESVWHAMQHYTDTRNSESPDELWIVEHPPVFTQGQAGKSEHILNAGDIPVIQVDRGGQVTYHGPGQLVVYPLIDIKRSKIGVRQLVTHIEQSIINMLAKYDIQAYAKADAPGVYVNERKIASLGLRIRRGCSFHGLALNVDMDLAPFRRINPCGYAGLEMVQSKALGGPQTVTEAGEQLTITFSQLLGYQHLVHHQGLAAS.

A BPL/LPL catalytic domain is found at 34–209 (SESPDELWIV…TFSQLLGYQH (176 aa)). Residues 73–80 (RGGQVTYH), 140–142 (SLG), and 153–155 (GLA) contribute to the substrate site. Cys171 acts as the Acyl-thioester intermediate in catalysis.

Belongs to the LipB family.

The protein resides in the cytoplasm. It carries out the reaction octanoyl-[ACP] + L-lysyl-[protein] = N(6)-octanoyl-L-lysyl-[protein] + holo-[ACP] + H(+). It functions in the pathway protein modification; protein lipoylation via endogenous pathway; protein N(6)-(lipoyl)lysine from octanoyl-[acyl-carrier-protein]: step 1/2. Functionally, catalyzes the transfer of endogenously produced octanoic acid from octanoyl-acyl-carrier-protein onto the lipoyl domains of lipoate-dependent enzymes. Lipoyl-ACP can also act as a substrate although octanoyl-ACP is likely to be the physiological substrate. The protein is Octanoyltransferase of Shewanella putrefaciens (strain CN-32 / ATCC BAA-453).